Reading from the N-terminus, the 452-residue chain is Bifunctional protein GlmU (452 aa).

Residues 1-226 (MAFSVVVLAA…AVEVEGVNNR (226 aa)) are pyrophosphorylase. Residues 8 to 11 (LAAG), lysine 22, glutamine 73, and 78 to 79 (GT) each bind UDP-N-acetyl-alpha-D-glucosamine. Position 102 (aspartate 102) interacts with Mg(2+). Residues glycine 137, glutamate 151, asparagine 166, and asparagine 224 each contribute to the UDP-N-acetyl-alpha-D-glucosamine site. Mg(2+) is bound at residue asparagine 224. The linker stretch occupies residues 227–247 (LQLANLERALQNRQADELMTN). An N-acetyltransferase region spans residues 248-452 (GVTLLDPSRF…IPNWPRPTKK (205 aa)). Residues arginine 330 and lysine 348 each coordinate UDP-N-acetyl-alpha-D-glucosamine. The active-site Proton acceptor is the histidine 360. Tyrosine 363 and asparagine 374 together coordinate UDP-N-acetyl-alpha-D-glucosamine. Residues alanine 377, 383–384 (NY), serine 402, alanine 420, and arginine 437 contribute to the acetyl-CoA site.

The protein in the N-terminal section; belongs to the N-acetylglucosamine-1-phosphate uridyltransferase family. It in the C-terminal section; belongs to the transferase hexapeptide repeat family. As to quaternary structure, homotrimer. It depends on Mg(2+) as a cofactor.

Its subcellular location is the cytoplasm. The catalysed reaction is alpha-D-glucosamine 1-phosphate + acetyl-CoA = N-acetyl-alpha-D-glucosamine 1-phosphate + CoA + H(+). The enzyme catalyses N-acetyl-alpha-D-glucosamine 1-phosphate + UTP + H(+) = UDP-N-acetyl-alpha-D-glucosamine + diphosphate. It functions in the pathway nucleotide-sugar biosynthesis; UDP-N-acetyl-alpha-D-glucosamine biosynthesis; N-acetyl-alpha-D-glucosamine 1-phosphate from alpha-D-glucosamine 6-phosphate (route II): step 2/2. It participates in nucleotide-sugar biosynthesis; UDP-N-acetyl-alpha-D-glucosamine biosynthesis; UDP-N-acetyl-alpha-D-glucosamine from N-acetyl-alpha-D-glucosamine 1-phosphate: step 1/1. The protein operates within bacterial outer membrane biogenesis; LPS lipid A biosynthesis. In terms of biological role, catalyzes the last two sequential reactions in the de novo biosynthetic pathway for UDP-N-acetylglucosamine (UDP-GlcNAc). The C-terminal domain catalyzes the transfer of acetyl group from acetyl coenzyme A to glucosamine-1-phosphate (GlcN-1-P) to produce N-acetylglucosamine-1-phosphate (GlcNAc-1-P), which is converted into UDP-GlcNAc by the transfer of uridine 5-monophosphate (from uridine 5-triphosphate), a reaction catalyzed by the N-terminal domain. This Alteromonas mediterranea (strain DSM 17117 / CIP 110805 / LMG 28347 / Deep ecotype) protein is Bifunctional protein GlmU.